Reading from the N-terminus, the 2499-residue chain is Probable polyketide synthase 23 (2499 aa).

One can recognise a Ketosynthase family 3 (KS3) domain in the interval D11–E430. Active-site for beta-ketoacyl synthase activity residues include C177, H316, and H354. The interval G623 to Y656 is acyl/malonyl transferases. S633 functions as the For acyl/malonyl transferase activity in the catalytic mechanism. The interval I924–V1044 is N-terminal hotdog fold. The PKS/mFAS DH domain occupies I924 to D1209. H956 functions as the Proton acceptor; for dehydratase activity in the catalytic mechanism. A C-terminal hotdog fold region spans residues N1059–D1209. The Proton donor; for dehydratase activity role is filled by D1121. In terms of domain architecture, Carrier spans E2414–V2491. At S2451 the chain carries O-(pantetheine 4'-phosphoryl)serine.

It depends on pantetheine 4'-phosphate as a cofactor.

Probable polyketide synthase. The polypeptide is Probable polyketide synthase 23 (pks23) (Dictyostelium discoideum (Social amoeba)).